Reading from the N-terminus, the 236-residue chain is Small ribosomal subunit protein mS41 (236 aa).

Belongs to the mitochondrion-specific ribosomal protein mS41 family. As to quaternary structure, component of the mitochondrial small ribosomal subunit (mt-SSU). Mature N.crassa 74S mitochondrial ribosomes consist of a small (37S) and a large (54S) subunit. The 37S small subunit contains a 16S ribosomal RNA (16S mt-rRNA) and 32 different proteins. The 54S large subunit contains a 23S rRNA (23S mt-rRNA) and 42 different proteins.

The protein resides in the mitochondrion. Component of the mitochondrial ribosome (mitoribosome), a dedicated translation machinery responsible for the synthesis of mitochondrial genome-encoded proteins, including at least some of the essential transmembrane subunits of the mitochondrial respiratory chain. The mitoribosomes are attached to the mitochondrial inner membrane and translation products are cotranslationally integrated into the membrane. In Neurospora crassa (strain ATCC 24698 / 74-OR23-1A / CBS 708.71 / DSM 1257 / FGSC 987), this protein is Small ribosomal subunit protein mS41 (fyv4).